A 549-amino-acid polypeptide reads, in one-letter code: Cobalt-dependent inorganic pyrophosphatase (549 aa).

2 consecutive CBS domains span residues 74 to 130 and 252 to 310; these read EMDK…IWDS and MTKD…VIQV. AMP-binding positions include Lys100, 116–119, Thr253, Val258, and 278–280; these read STSN and YSN.

This sequence belongs to the PPase family. Homodimer. Co(2+) is required as a cofactor. Mn(2+) serves as cofactor. Requires Mg(2+) as cofactor.

The catalysed reaction is diphosphate + H2O = 2 phosphate + H(+). Inhibited by AMP and ADP with 25% and 35% of activity remaining, respectively, at saturating conditions. Activated 5-fold by diadenosine polyphosphates(Ap[n]A) with n&gt;2 (Ap3A, Ap4A, Ap5A, Ap6A) at saturating conditions. The sequence is that of Cobalt-dependent inorganic pyrophosphatase from Clostridium perfringens (strain 13 / Type A).